Here is a 607-residue protein sequence, read N- to C-terminus: Albumin (607 aa).

The signal sequence occupies residues 1-18; the sequence is MKWVTFVSLLFLFSSAYS. Residues 19–24 constitute a propeptide that is removed on maturation; sequence RGVLRR. 3 Albumin domains span residues 19-209, 210-402, and 403-600; these read RGVL…DALK, ERIL…QFTP, and LVEE…KLVA. Cu cation is bound at residue H27. Position 29 is a phosphoserine (S29). Ca(2+)-binding residues include E30 and D37. Residues C77 and C86 are joined by a disulfide bond. Phosphoserine occurs at positions 82 and 89. H91 serves as a coordination point for Zn(2+). Cystine bridges form between C99–C115, C114–C125, C147–C192, C191–C200, C223–C269, and C268–C276. Phosphothreonine is present on T107. Ca(2+) is bound at residue E267. Zn(2+)-binding residues include H270 and D272. 4 residues coordinate Ca(2+): D272, E275, D278, and D282. Disulfide bonds link C288–C302, C301–C312, C339–C384, C383–C392, C415–C461, C460–C471, C484–C500, and C499–C510. A Phosphoserine modification is found at S442. Phosphothreonine occurs at positions 443 and 445. S512 is modified (phosphoserine). Intrachain disulfides connect C537-C582 and C581-C590. K557 is modified (N6-methyllysine). T569 carries the post-translational modification Phosphothreonine. The residue at position 587 (K587) is an N6-succinyllysine.

The protein belongs to the ALB/AFP/VDB family. In terms of assembly, interacts with FCGRT; this interaction regulates ALB homeostasis. Interacts with TASOR. In plasma, occurs in a covalently-linked complex with chromophore-bound alpha-1-microglobulin; this interaction does not prevent fatty acid binding to ALB. Phosphorylated by FAM20C in the extracellular medium. In terms of tissue distribution, plasma.

The protein resides in the secreted. In terms of biological role, binds water, Ca(2+), Na(+), K(+), fatty acids, hormones, bilirubin and drugs. Its main function is the regulation of the colloidal osmotic pressure of blood. Major zinc transporter in plasma, typically binds about 80% of all plasma zinc. Major calcium and magnesium transporter in plasma, binds approximately 45% of circulating calcium and magnesium in plasma. Potentially has more than two calcium-binding sites and might additionally bind calcium in a non-specific manner. The shared binding site between zinc and calcium at residue Asp-272 suggests a crosstalk between zinc and calcium transport in the blood. The rank order of affinity is zinc &gt; calcium &gt; magnesium. Binds to the bacterial siderophore enterobactin and inhibits enterobactin-mediated iron uptake of E.coli from ferric transferrin, and may thereby limit the utilization of iron and growth of enteric bacteria such as E.coli. Does not prevent iron uptake by the bacterial siderophore aerobactin. The sequence is that of Albumin (ALB) from Equus caballus (Horse).